An 822-amino-acid chain; its full sequence is Pentatricopeptide repeat-containing protein At2g41720 (822 aa).

Residues 1–28 (MATVTNFKLVTPPESSRADKPGATKASD) are disordered. PPR repeat units follow at residues 106–136 (ARKN…MKIQ), 142–176 (RNDI…SCKP), 177–211 (DAET…AIAP), 212–246 (SRST…GVGP), 247–281 (DLVT…KVRP), 282–316 (DTTT…RAEC), 319–353 (DVVT…GLKP), 354–388 (NIVS…GIIP), 389–423 (DVVS…RRKP), 424–458 (NVVT…GIKP), 459–493 (NVVS…GINL), 494–528 (NTAA…KVKA), 529–563 (DSVT…SIPL), 564–598 (TKEV…GCEP), 599–633 (DVIA…GIEP), 634–668 (DSIA…EIPF), 669–699 (TGAV…MDPY), 704–738 (SIGL…GVGI), and 739–773 (NLKT…GIQP).

It belongs to the PPR family. P subfamily.

This chain is Pentatricopeptide repeat-containing protein At2g41720 (EMB2654), found in Arabidopsis thaliana (Mouse-ear cress).